We begin with the raw amino-acid sequence, 468 residues long: Adenylyltransferase and sulfurtransferase MOCS3-1 (468 aa).

Residues glycine 111, aspartate 132, 139–143 (NNLHR), lysine 156, and 200–201 (DN) contribute to the ATP site. Residues cysteine 241 and cysteine 244 each coordinate Zn(2+). The Glycyl thioester intermediate; for adenylyltransferase activity role is filled by cysteine 258. The Zn(2+) site is built by cysteine 316 and cysteine 319. One can recognise a Rhodanese domain in the interval 371-466 (DGEPHLLLDV…WGRDVDPDFP (96 aa)). Cysteine 426 (cysteine persulfide intermediate; for sulfurtransferase activity) is an active-site residue.

This sequence in the N-terminal section; belongs to the HesA/MoeB/ThiF family. UBA4 subfamily. It depends on Zn(2+) as a cofactor.

The protein resides in the cytoplasm. The enzyme catalyses [molybdopterin-synthase sulfur-carrier protein]-C-terminal Gly-Gly + ATP + H(+) = [molybdopterin-synthase sulfur-carrier protein]-C-terminal Gly-Gly-AMP + diphosphate. It carries out the reaction [molybdopterin-synthase sulfur-carrier protein]-C-terminal Gly-Gly-AMP + S-sulfanyl-L-cysteinyl-[cysteine desulfurase] + AH2 = [molybdopterin-synthase sulfur-carrier protein]-C-terminal-Gly-aminoethanethioate + L-cysteinyl-[cysteine desulfurase] + A + AMP + 2 H(+). It functions in the pathway tRNA modification; 5-methoxycarbonylmethyl-2-thiouridine-tRNA biosynthesis. Its pathway is cofactor biosynthesis; molybdopterin biosynthesis. Its function is as follows. Plays a central role in 2-thiolation of mcm(5)S(2)U at tRNA wobble positions of cytosolic tRNA(Lys), tRNA(Glu) and tRNA(Gln). Also essential during biosynthesis of the molybdenum cofactor. Acts by mediating the C-terminal thiocarboxylation of sulfur carriers URM1 and MOCS2A. Its N-terminus first activates URM1 and MOCS2A as acyl-adenylates (-COAMP), then the persulfide sulfur on the catalytic cysteine is transferred to URM1 and MOCS2A to form thiocarboxylation (-COSH) of their C-terminus. The reaction probably involves hydrogen sulfide that is generated from the persulfide intermediate and that acts as a nucleophile towards URM1 and MOCS2A. Subsequently, a transient disulfide bond is formed. Does not use thiosulfate as sulfur donor; NFS1 probably acting as a sulfur donor for thiocarboxylation reactions. This chain is Adenylyltransferase and sulfurtransferase MOCS3-1, found in Zea mays (Maize).